A 681-amino-acid chain; its full sequence is Chaperone protein HtpG (681 aa).

Positions 1-326 are a; substrate-binding; it reads MQKGNIGVTT…SPDIPLNVSR (326 aa). Residues 327–545 form a b region; it reads SYLQSDSNVK…YMRRMKEMAN (219 aa). Residues 546-681 are c; it reads IQAGMSFYGE…NFVKRSIELI (136 aa). The segment at 601 to 620 is disordered; that stretch reads DALKKKQEGKKDEDIPTAEK.

It belongs to the heat shock protein 90 family. Homodimer.

It is found in the cytoplasm. Its function is as follows. Molecular chaperone. Has ATPase activity. This is Chaperone protein HtpG from Bacteroides fragilis (strain ATCC 25285 / DSM 2151 / CCUG 4856 / JCM 11019 / LMG 10263 / NCTC 9343 / Onslow / VPI 2553 / EN-2).